Consider the following 275-residue polypeptide: Chlorophyll a-b binding protein 3, chloroplastic (275 aa).

A chlorophyll b-binding site is contributed by Trp-58. The chlorophyll a site is built by Phe-78, Ser-84, and Glu-102. Residues Arg-107, Ile-142, Glu-169, and Arg-172 each contribute to the chlorophyll b site. Lys-226, Glu-227, Asn-230, Arg-232, Gln-244, and His-259 together coordinate chlorophyll a. The chain crosses the membrane as a helical span at residues 233–253 (LAMLAILGYFIQGLVTGVGPY).

Belongs to the light-harvesting chlorophyll a/b-binding (LHC) protein family. In terms of assembly, the LHC complex consists of chlorophyll a-b binding proteins. Binds at least 14 chlorophylls (8 Chl-a and 6 Chl-b) and carotenoids such as lutein and neoxanthin. is required as a cofactor. Photoregulated by reversible phosphorylation of its threonine residues.

Its subcellular location is the plastid. It is found in the chloroplast thylakoid membrane. Functionally, the light-harvesting complex (LHC) functions as a light receptor, it captures and delivers excitation energy to photosystems with which it is closely associated. Its function is as follows. May channel protons produced in the catalytic Mn center of water oxidation into the thylakoid lumen. The chain is Chlorophyll a-b binding protein 3, chloroplastic from Pisum sativum (Garden pea).